A 202-amino-acid polypeptide reads, in one-letter code: Small ribosomal subunit protein uS4 (202 aa).

The interval 15 to 43 is disordered; the sequence is LGDLPGLTRKAAKRSNPPGQHGNARRKRS. The 63-residue stretch at 90-152 folds into the S4 RNA-binding domain; that stretch reads GRLDNVCFRL…KGSKKLAEGN (63 aa).

The protein belongs to the universal ribosomal protein uS4 family. Part of the 30S ribosomal subunit. Contacts protein S5. The interaction surface between S4 and S5 is involved in control of translational fidelity.

Its function is as follows. One of the primary rRNA binding proteins, it binds directly to 16S rRNA where it nucleates assembly of the body of the 30S subunit. In terms of biological role, with S5 and S12 plays an important role in translational accuracy. This chain is Small ribosomal subunit protein uS4, found in Prochlorococcus marinus (strain SARG / CCMP1375 / SS120).